We begin with the raw amino-acid sequence, 705 residues long: Translation initiation factor IF-2 (705 aa).

The interval Asp-40–Ser-124 is disordered. The span at Asp-41–Asn-58 shows a compositional bias: basic and acidic residues. A compositionally biased stretch (low complexity) spans Lys-59–Gly-77. Basic residues predominate over residues Lys-94–Lys-108. Residues Glu-207–Lys-376 form the tr-type G domain. Positions Gly-216–Thr-223 are G1. Gly-216–Thr-223 provides a ligand contact to GTP. Residues Gly-241–His-245 are G2. The tract at residues Asp-262 to Gly-265 is G3. Residues Asp-262–His-266 and Asn-316–Asp-319 each bind GTP. The interval Asn-316 to Asp-319 is G4. Residues Ser-352–Leu-354 are G5.

It belongs to the TRAFAC class translation factor GTPase superfamily. Classic translation factor GTPase family. IF-2 subfamily.

It is found in the cytoplasm. One of the essential components for the initiation of protein synthesis. Protects formylmethionyl-tRNA from spontaneous hydrolysis and promotes its binding to the 30S ribosomal subunits. Also involved in the hydrolysis of GTP during the formation of the 70S ribosomal complex. The chain is Translation initiation factor IF-2 from Staphylococcus aureus (strain Mu3 / ATCC 700698).